Consider the following 697-residue polypeptide: Elongation factor G (697 aa).

Positions 8 to 290 constitute a tr-type G domain; the sequence is ERYRNIGISA…AVLDFLPSPV (283 aa). GTP is bound by residues 17–24, 88–92, and 142–145; these read AHIDAGKT, DTPGH, and NKMD.

The protein belongs to the TRAFAC class translation factor GTPase superfamily. Classic translation factor GTPase family. EF-G/EF-2 subfamily.

Its subcellular location is the cytoplasm. Functionally, catalyzes the GTP-dependent ribosomal translocation step during translation elongation. During this step, the ribosome changes from the pre-translocational (PRE) to the post-translocational (POST) state as the newly formed A-site-bound peptidyl-tRNA and P-site-bound deacylated tRNA move to the P and E sites, respectively. Catalyzes the coordinated movement of the two tRNA molecules, the mRNA and conformational changes in the ribosome. This chain is Elongation factor G, found in Methylobacillus flagellatus (strain ATCC 51484 / DSM 6875 / VKM B-1610 / KT).